Consider the following 67-residue polypeptide: DNA-directed RNA polymerase subunit omega (67 aa).

It belongs to the RNA polymerase subunit omega family. As to quaternary structure, the RNAP catalytic core consists of 2 alpha, 1 beta, 1 beta' and 1 omega subunit. When a sigma factor is associated with the core the holoenzyme is formed, which can initiate transcription.

It carries out the reaction RNA(n) + a ribonucleoside 5'-triphosphate = RNA(n+1) + diphosphate. Its function is as follows. Promotes RNA polymerase assembly. Latches the N- and C-terminal regions of the beta' subunit thereby facilitating its interaction with the beta and alpha subunits. In Cupriavidus metallidurans (strain ATCC 43123 / DSM 2839 / NBRC 102507 / CH34) (Ralstonia metallidurans), this protein is DNA-directed RNA polymerase subunit omega.